We begin with the raw amino-acid sequence, 178 residues long: Caveolin-1 (178 aa).

Position 2 is an N-acetylserine (Ser-2). Ser-2 is modified (phosphoserine). A required for homooligomerization region spans residues 2–94 (SGGKYVDSEG…WKASFTTFTV (93 aa)). Residues 2 to 104 (SGGKYVDSEG…TKYWFYRLLS (103 aa)) lie on the Cytoplasmic side of the membrane. Lys-5 is modified (N6-acetyllysine; alternate). Lys-5 participates in a covalent cross-link: Glycyl lysine isopeptide (Lys-Gly) (interchain with G-Cter in ubiquitin); alternate. Tyr-6 bears the Phosphotyrosine mark. Ser-9 carries the post-translational modification Phosphoserine. Phosphotyrosine; by ABL1 is present on Tyr-14. Tyr-25 carries the phosphotyrosine modification. Residues Lys-26, Lys-39, Lys-47, and Lys-57 each participate in a glycyl lysine isopeptide (Lys-Gly) (interchain with G-Cter in ubiquitin) cross-link. Positions 82–94 (DGIWKASFTTFTV) are interaction with CAVIN3. The segment at residues 105–125 (ALFGIPMALIWGIYFAILSFL) is an intramembrane region (helical). Topologically, residues 126–178 (HIWAVVPCIKSFLIEIQCISRVYSIYVHTFCDPLFEAIGKIFSSIRINMQKEI) are cytoplasmic. The segment at 131-142 (VPCIKSFLIEIQ) is interacts with SPRY1, SPRY2, SPRY3 and SPRY4. S-palmitoyl cysteine attachment occurs at residues Cys-133, Cys-143, and Cys-156. Residues 149–160 (SIYVHTFCDPLF) form an interacts with SPRY1, SPRY2, and SPRY4 region. An interacts with SPRY1, SPRY2, SPRY3 and SPRY4 region spans residues 167–178 (FSSIRINMQKEI).

The protein belongs to the caveolin family. Homooligomer. Interacts with GLIPR2. Interacts with NOSTRIN. Interacts with SNAP25 and STX1A. Interacts (via the N-terminus) with DPP4; the interaction is direct. Interacts with CTNNB1, CDH1 and JUP. Interacts with PACSIN2; this interaction induces membrane tubulation. Interacts with SLC7A9. Interacts with BMX and BTK. Interacts with TGFBR1. Interacts with CAVIN3 (via leucine-zipper domain) in a cholesterol-sensitive manner. Interacts with CAVIN1. Interacts with EHD2 in a cholesterol-dependent manner. Forms a ternary complex with UBXN6 and VCP; mediates CAV1 targeting to lysosomes for degradation. Interacts with ABCG1; this interaction regulates ABCG1-mediated cholesterol efflux. Interacts with NEU3; this interaction enhances NEU3 sialidase activity within caveola. Interacts (via C-terminus) with SPRY1, SPRY2 (via C-terminus), SPRY3, and SPRY4. Interacts with IGFBP5; this interaction allows trafficking of IGFBP5 from the plasma membrane to the nucleus. Post-translationally, phosphorylated at Tyr-14 by ABL1 in response to oxidative stress. In terms of processing, ubiquitinated. Undergo monoubiquitination and multi- and/or polyubiquitination. Monoubiquitination of N-terminal lysines promotes integration in a ternary complex with UBXN6 and VCP which promotes oligomeric CAV1 targeting to lysosomes for degradation. Ubiquitinated by ZNRF1; leading to degradation and modulation of the TLR4-mediated immune response.

The protein localises to the golgi apparatus membrane. The protein resides in the cell membrane. It localises to the membrane. It is found in the caveola. Its subcellular location is the membrane raft. In terms of biological role, may act as a scaffolding protein within caveolar membranes. Forms a stable heterooligomeric complex with CAV2 that targets to lipid rafts and drives caveolae formation. Mediates the recruitment of CAVIN proteins (CAVIN1/2/3/4) to the caveolae. Interacts directly with G-protein alpha subunits and can functionally regulate their activity. Involved in the costimulatory signal essential for T-cell receptor (TCR)-mediated T-cell activation. Its binding to DPP4 induces T-cell proliferation and NF-kappa-B activation in a T-cell receptor/CD3-dependent manner. Recruits CTNNB1 to caveolar membranes and may regulate CTNNB1-mediated signaling through the Wnt pathway. Negatively regulates TGFB1-mediated activation of SMAD2/3 by mediating the internalization of TGFBR1 from membrane rafts leading to its subsequent degradation. Binds 20(S)-hydroxycholesterol (20(S)-OHC). In Loxodonta africana (African elephant), this protein is Caveolin-1 (CAV1).